The chain runs to 360 residues: Alkanal monooxygenase alpha chain (360 aa).

The protein belongs to the bacterial luciferase oxidoreductase family. As to quaternary structure, heterodimer of an alpha and a beta chain.

It carries out the reaction a long-chain fatty aldehyde + FMNH2 + O2 = a long-chain fatty acid + hnu + FMN + H2O + 2 H(+). Its function is as follows. Light-emitting reaction in luminous bacteria. This chain is Alkanal monooxygenase alpha chain (luxA), found in Photorhabdus luminescens (Xenorhabdus luminescens).